Reading from the N-terminus, the 142-residue chain is Protein archease (142 aa).

Positions 12, 141, and 142 each coordinate Ca(2+).

This sequence belongs to the archease family. In solution, exists as a monomer, trimer and hexamer. Oligomeric states form a tripartite complex with tRNA and PAB1947 methyltransferase.

Functionally, activates the tRNA-splicing ligase complex by facilitating the enzymatic turnover of catalytic subunit RtcB. Acts by promoting the guanylylation of RtcB, a key intermediate step in tRNA ligation. Can also alter the NTP specificity of RtcB such that ATP, dGTP or ITP is used efficiently. Chaperone or modulator of proteins involved in DNA or RNA processing. Protects the tRNA (cytosine-5-)-methyltransferase PAB1947 against aggregation and increases its specificity. The polypeptide is Protein archease (Pyrococcus abyssi (strain GE5 / Orsay)).